Reading from the N-terminus, the 329-residue chain is G-protein coupled receptor 3 (329 aa).

The Extracellular portion of the chain corresponds to 1–43 (MMWGAGRSMAWFSAGSGSVNVSIDPAEEPTGPATLLPSPRAWD). A glycan (N-linked (GlcNAc...) asparagine) is linked at asparagine 20. The chain crosses the membrane as a helical span at residues 44 to 64 (VVLCISGTLVSCENALVVAII). The Cytoplasmic segment spans residues 65–73 (VGTPAFRAP). A helical transmembrane segment spans residues 74–94 (MFLLVGSLAVADLLAGLGLVL). Residues 95–108 (HFAADFCIGSPEMS) are Extracellular-facing. The helical transmembrane segment at 109–129 (LVLVGVLATAFTASIGSLLAI) threads the bilayer. Residues 130–153 (TVDRYLSLYNALTYYSETTVTRTY) are Cytoplasmic-facing. A helical transmembrane segment spans residues 154–174 (VMLALVWVGALGLGLVPVLAW). The Extracellular segment spans residues 175-192 (NCRDGLTTCGVVYPLSKN). A helical transmembrane segment spans residues 193-213 (HLVVLAIVFFMVFGIMLQLYA). The Cytoplasmic segment spans residues 214 to 247 (QICRIVCRHAQQIALQRHLLPASHYVATRKGIAT). A helical membrane pass occupies residues 248–268 (LAVVLGAFAACWLPFTVYCLL). Residues 269–277 (GDANSPPLY) lie on the Extracellular side of the membrane. Residues 278–298 (TYLTLLPATYNSMINPVIYAF) traverse the membrane as a helical segment. Over 299–329 (RNQDVQKVLWAICCCCSTSKIPFRSRSPSDV) the chain is Cytoplasmic. Cysteine 312 carries the S-palmitoyl cysteine lipid modification. A phosphoserine mark is found at serine 323, serine 325, and serine 327.

Belongs to the G-protein coupled receptor 1 family. Abundantly expressed in granule neurons at all development stages. Enriched in the longest tips of neurites during differentiation of hippocampal neurons.

The protein resides in the cell membrane. Constitutively active G-protein coupled receptor that maintains high 3'-5'-cyclic adenosine monophosphate (cAMP) levels that a plays a role in serveral processes including meiotic arrest in oocytes or neuronal development via activation of numerous intracellular signaling pathways. Acts as an essential activator of thermogenic adipocytes and drives thermogenesis via its intrinsic G(s)-coupling activity without the requirement of a ligand. Has a potential role in modulating a number of brain functions, including behavioral responses to stress, amyloid-beta peptide generation in neurons. Stimulates neurite outgrowth in cerebellar granular neurons modulated via PKA, ERK, and most strongly PI3K-mediated signaling pathways. The protein is G-protein coupled receptor 3 (Gpr3) of Rattus norvegicus (Rat).